The primary structure comprises 150 residues: Large ribosomal subunit protein bL9 (150 aa).

This sequence belongs to the bacterial ribosomal protein bL9 family.

In terms of biological role, binds to the 23S rRNA. The chain is Large ribosomal subunit protein bL9 from Corynebacterium glutamicum (strain R).